We begin with the raw amino-acid sequence, 198 residues long: Nucleoid occlusion factor SlmA (198 aa).

In terms of domain architecture, HTH tetR-type spans 11–71 (PNRKHQILES…GLIDFIEESI (61 aa)). The segment at residues 34 to 53 (TTAKLAAEVGFSEAALYRHF) is a DNA-binding region (H-T-H motif).

The protein belongs to the nucleoid occlusion factor SlmA family. As to quaternary structure, homodimer. Interacts with FtsZ.

Its subcellular location is the cytoplasm. The protein resides in the nucleoid. Its function is as follows. Required for nucleoid occlusion (NO) phenomenon, which prevents Z-ring formation and cell division over the nucleoid. Acts as a DNA-associated cell division inhibitor that binds simultaneously chromosomal DNA and FtsZ, and disrupts the assembly of FtsZ polymers. SlmA-DNA-binding sequences (SBS) are dispersed on non-Ter regions of the chromosome, preventing FtsZ polymerization at these regions. The sequence is that of Nucleoid occlusion factor SlmA from Colwellia psychrerythraea (strain 34H / ATCC BAA-681) (Vibrio psychroerythus).